A 188-amino-acid chain; its full sequence is Adenine phosphoribosyltransferase (188 aa).

The protein belongs to the purine/pyrimidine phosphoribosyltransferase family. As to quaternary structure, homodimer.

Its subcellular location is the cytoplasm. The catalysed reaction is AMP + diphosphate = 5-phospho-alpha-D-ribose 1-diphosphate + adenine. The protein operates within purine metabolism; AMP biosynthesis via salvage pathway; AMP from adenine: step 1/1. In terms of biological role, catalyzes a salvage reaction resulting in the formation of AMP, that is energically less costly than de novo synthesis. This is Adenine phosphoribosyltransferase from Salinispora tropica (strain ATCC BAA-916 / DSM 44818 / JCM 13857 / NBRC 105044 / CNB-440).